A 307-amino-acid polypeptide reads, in one-letter code: Ribonuclease Z (307 aa).

Residues His63, His65, Asp67, His68, His141, Asp212, and His270 each coordinate Zn(2+). Catalysis depends on Asp67, which acts as the Proton acceptor.

This sequence belongs to the RNase Z family. Homodimer. It depends on Zn(2+) as a cofactor.

It carries out the reaction Endonucleolytic cleavage of RNA, removing extra 3' nucleotides from tRNA precursor, generating 3' termini of tRNAs. A 3'-hydroxy group is left at the tRNA terminus and a 5'-phosphoryl group is left at the trailer molecule.. Functionally, zinc phosphodiesterase, which displays some tRNA 3'-processing endonuclease activity. Probably involved in tRNA maturation, by removing a 3'-trailer from precursor tRNA. The chain is Ribonuclease Z from Bacillus anthracis (strain A0248).